The chain runs to 141 residues: Lutropin subunit beta (141 aa).

Positions Met-1–Ala-20 are cleaved as a signal peptide. 6 disulfides stabilise this stretch: Cys-29/Cys-77, Cys-43/Cys-92, Cys-46/Cys-130, Cys-54/Cys-108, Cys-58/Cys-110, and Cys-113/Cys-120. Asn-33 carries N-linked (GlcNAc...) asparagine glycosylation.

This sequence belongs to the glycoprotein hormones subunit beta family. Heterodimer of a common alpha chain and a unique beta chain which confers biological specificity to thyrotropin, lutropin, follitropin and gonadotropin.

It localises to the secreted. Functionally, promotes spermatogenesis and ovulation by stimulating the testes and ovaries to synthesize steroids. This is Lutropin subunit beta (LHB) from Bos taurus (Bovine).